The sequence spans 323 residues: Elongation factor P--(R)-beta-lysine ligase (323 aa).

Position 76 to 78 (76 to 78) interacts with substrate; sequence SPE. ATP-binding positions include 100–102 and asparagine 109; that span reads RNE. A substrate-binding site is contributed by tyrosine 118. 242-243 serves as a coordination point for ATP; that stretch reads EL. Substrate is bound at residue glutamate 249. Glycine 298 provides a ligand contact to ATP.

Belongs to the class-II aminoacyl-tRNA synthetase family. EpmA subfamily. In terms of assembly, homodimer.

It catalyses the reaction D-beta-lysine + L-lysyl-[protein] + ATP = N(6)-((3R)-3,6-diaminohexanoyl)-L-lysyl-[protein] + AMP + diphosphate + H(+). Functionally, with EpmB is involved in the beta-lysylation step of the post-translational modification of translation elongation factor P (EF-P). Catalyzes the ATP-dependent activation of (R)-beta-lysine produced by EpmB, forming a lysyl-adenylate, from which the beta-lysyl moiety is then transferred to the epsilon-amino group of a conserved specific lysine residue in EF-P. The protein is Elongation factor P--(R)-beta-lysine ligase of Actinobacillus succinogenes (strain ATCC 55618 / DSM 22257 / CCUG 43843 / 130Z).